The sequence spans 109 residues: Nucleoid-associated protein LJ_0424 (109 aa).

Belongs to the YbaB/EbfC family. In terms of assembly, homodimer.

The protein resides in the cytoplasm. It is found in the nucleoid. In terms of biological role, binds to DNA and alters its conformation. May be involved in regulation of gene expression, nucleoid organization and DNA protection. The protein is Nucleoid-associated protein LJ_0424 of Lactobacillus johnsonii (strain CNCM I-12250 / La1 / NCC 533).